A 273-amino-acid chain; its full sequence is Formamidopyrimidine-DNA glycosylase (273 aa).

Proline 2 serves as the catalytic Schiff-base intermediate with DNA. Residue glutamate 3 is the Proton donor of the active site. The active-site Proton donor; for beta-elimination activity is lysine 58. The DNA site is built by histidine 92, arginine 111, and lysine 153. The FPG-type zinc finger occupies 238–272; the sequence is KVYGREGQSCLSCSSTIIKIKHSGRSTFYCKTCQY. The active-site Proton donor; for delta-elimination activity is the arginine 262.

The protein belongs to the FPG family. As to quaternary structure, monomer. Requires Zn(2+) as cofactor.

It carries out the reaction Hydrolysis of DNA containing ring-opened 7-methylguanine residues, releasing 2,6-diamino-4-hydroxy-5-(N-methyl)formamidopyrimidine.. The enzyme catalyses 2'-deoxyribonucleotide-(2'-deoxyribose 5'-phosphate)-2'-deoxyribonucleotide-DNA = a 3'-end 2'-deoxyribonucleotide-(2,3-dehydro-2,3-deoxyribose 5'-phosphate)-DNA + a 5'-end 5'-phospho-2'-deoxyribonucleoside-DNA + H(+). Involved in base excision repair of DNA damaged by oxidation or by mutagenic agents. Acts as a DNA glycosylase that recognizes and removes damaged bases. Has a preference for oxidized purines, such as 7,8-dihydro-8-oxoguanine (8-oxoG). Has AP (apurinic/apyrimidinic) lyase activity and introduces nicks in the DNA strand. Cleaves the DNA backbone by beta-delta elimination to generate a single-strand break at the site of the removed base with both 3'- and 5'-phosphates. This is Formamidopyrimidine-DNA glycosylase from Rickettsia africae (strain ESF-5).